A 151-amino-acid chain; its full sequence is Sperm surface protein Sp17 (151 aa).

Positions 68 to 98 (FYNNHAFEEQEPPEKSDPKQEESQIPGKEEE) are enriched in basic and acidic residues. 2 disordered regions span residues 68 to 115 (FYNN…EKEE) and 130 to 151 (AREE…EENK). In terms of domain architecture, IQ spans 114 to 143 (EEVAAVKIQAAFRGHVAREEVKKMKTDSLQ).

Homodimer. May interact with ROPN1. As to expression, testis- and sperm-specific.

The protein resides in the membrane. In terms of biological role, sperm surface zona pellucida binding protein. Helps to bind spermatozoa to the zona pellucida with high affinity. Might function in binding zona pellucida and carbohydrates. In Macaca fascicularis (Crab-eating macaque), this protein is Sperm surface protein Sp17 (SPA17).